The sequence spans 1161 residues: Nardilysin (1161 aa).

Positions 1–18 (MLRRVAVAAVFATGRKLR) are cleaved as a signal peptide. Disordered stretches follow at residues 42–105 (KPFP…KSPS) and 130–218 (VEGK…KKTT). Phosphoserine is present on residues serine 85, serine 91, and serine 93. Residues 138 to 209 (TDEEEEEEEE…EENELEELEE (72 aa)) are compositionally biased toward acidic residues. Residue histidine 244 coordinates Zn(2+). The active-site Proton acceptor is glutamate 247. Residues histidine 248 and glutamate 325 each contribute to the Zn(2+) site.

The protein belongs to the peptidase M16 family. In terms of assembly, interacts with BACE1 and NRG1. Zn(2+) is required as a cofactor. As to expression, testis, and in a lower level in brain, heart and adrenal glands.

The protein resides in the mitochondrion. Its subcellular location is the cell projection. The protein localises to the dendrite. It carries out the reaction Hydrolysis of polypeptides, preferably at -Xaa-|-Arg-Lys-, and less commonly at -Arg-|-Arg-Xaa-, in which Xaa is not Arg or Lys.. Its function is as follows. Cleaves peptide substrates on the N-terminus of arginine residues in dibasic pairs. Is a critical activator of BACE1- and ADAM17-mediated pro-neuregulin ectodomain shedding, involved in the positive regulation of axonal maturation and myelination. Required for proper functioning of 2-oxoglutarate dehydrogenase (OGDH). The protein is Nardilysin of Rattus norvegicus (Rat).